A 320-amino-acid chain; its full sequence is ATP-dependent 6-phosphofructokinase (320 aa).

ATP-binding positions include G11, 72–73 (RY), and 102–105 (GDGS). D103 lines the Mg(2+) pocket. Substrate contacts are provided by residues 125–127 (TID), R162, 169–171 (MGR), E222, R243, and 249–252 (HMQR). The active-site Proton acceptor is D127.

This sequence belongs to the phosphofructokinase type A (PFKA) family. ATP-dependent PFK group I subfamily. Prokaryotic clade 'B1' sub-subfamily. Homotetramer. The cofactor is Mg(2+).

The protein localises to the cytoplasm. It carries out the reaction beta-D-fructose 6-phosphate + ATP = beta-D-fructose 1,6-bisphosphate + ADP + H(+). Its pathway is carbohydrate degradation; glycolysis; D-glyceraldehyde 3-phosphate and glycerone phosphate from D-glucose: step 3/4. Its activity is regulated as follows. Allosterically activated by ADP and other diphosphonucleosides, and allosterically inhibited by phosphoenolpyruvate. Its function is as follows. Catalyzes the phosphorylation of D-fructose 6-phosphate to fructose 1,6-bisphosphate by ATP, the first committing step of glycolysis. The protein is ATP-dependent 6-phosphofructokinase of Lactiplantibacillus plantarum (strain ATCC BAA-793 / NCIMB 8826 / WCFS1) (Lactobacillus plantarum).